We begin with the raw amino-acid sequence, 239 residues long: Geranylgeranylglyceryl phosphate synthase (239 aa).

2 residues coordinate Mg(2+): D18 and S45. Sn-glycerol 1-phosphate is bound by residues 166–172, 197–198, and 219–220; these read YLEAGSG, GG, and GT.

It belongs to the GGGP/HepGP synthase family. Group II subfamily. Requires Mg(2+) as cofactor.

It localises to the cytoplasm. The enzyme catalyses sn-glycerol 1-phosphate + (2E,6E,10E)-geranylgeranyl diphosphate = sn-3-O-(geranylgeranyl)glycerol 1-phosphate + diphosphate. It functions in the pathway membrane lipid metabolism; glycerophospholipid metabolism. Prenyltransferase that catalyzes the transfer of the geranylgeranyl moiety of geranylgeranyl diphosphate (GGPP) to the C3 hydroxyl of sn-glycerol-1-phosphate (G1P). This reaction is the first ether-bond-formation step in the biosynthesis of archaeal membrane lipids. This chain is Geranylgeranylglyceryl phosphate synthase, found in Pyrobaculum aerophilum (strain ATCC 51768 / DSM 7523 / JCM 9630 / CIP 104966 / NBRC 100827 / IM2).